The primary structure comprises 476 residues: ATP synthase subunit beta (476 aa).

An ATP-binding site is contributed by G154–T161.

It belongs to the ATPase alpha/beta chains family. As to quaternary structure, F-type ATPases have 2 components, CF(1) - the catalytic core - and CF(0) - the membrane proton channel. CF(1) has five subunits: alpha(3), beta(3), gamma(1), delta(1), epsilon(1). CF(0) has three main subunits: a(1), b(2) and c(9-12). The alpha and beta chains form an alternating ring which encloses part of the gamma chain. CF(1) is attached to CF(0) by a central stalk formed by the gamma and epsilon chains, while a peripheral stalk is formed by the delta and b chains.

The protein resides in the cell inner membrane. It catalyses the reaction ATP + H2O + 4 H(+)(in) = ADP + phosphate + 5 H(+)(out). Functionally, produces ATP from ADP in the presence of a proton gradient across the membrane. The catalytic sites are hosted primarily by the beta subunits. In Afipia carboxidovorans (strain ATCC 49405 / DSM 1227 / KCTC 32145 / OM5) (Oligotropha carboxidovorans), this protein is ATP synthase subunit beta.